The primary structure comprises 194 residues: MPEIIGKLLKSDGKVVSEIEKQVSQALIDLETNDDVQSQLKELYIVGVKEVELGNKSAIIIYVPVPQLKAFHKIHPALVRELEKKFGGRDILILAKRRILPKPQRGSKARPQKQKRPRSRTLTAVHDAWLDELVYPAEVVGRRIRVKLDGKKVYKVHLDKSHQTNVGHKIGVFASVYRKLTGKDVTFEFPDPIF.

This sequence belongs to the eukaryotic ribosomal protein eS7 family.

The sequence is that of Small ribosomal subunit protein eS7 (rps-7) from Caenorhabditis elegans.